A 199-amino-acid chain; its full sequence is FMN-dependent NADH:quinone oxidoreductase (199 aa).

Serine 10 lines the FMN pocket.

Belongs to the azoreductase type 1 family. As to quaternary structure, homodimer. Requires FMN as cofactor.

The catalysed reaction is 2 a quinone + NADH + H(+) = 2 a 1,4-benzosemiquinone + NAD(+). It carries out the reaction N,N-dimethyl-1,4-phenylenediamine + anthranilate + 2 NAD(+) = 2-(4-dimethylaminophenyl)diazenylbenzoate + 2 NADH + 2 H(+). In terms of biological role, quinone reductase that provides resistance to thiol-specific stress caused by electrophilic quinones. Functionally, also exhibits azoreductase activity. Catalyzes the reductive cleavage of the azo bond in aromatic azo compounds to the corresponding amines. The polypeptide is FMN-dependent NADH:quinone oxidoreductase (Cellvibrio japonicus (strain Ueda107) (Pseudomonas fluorescens subsp. cellulosa)).